A 563-amino-acid chain; its full sequence is Testis-expressed basic protein 1 (563 aa).

Residues 3–23 (VLEITLAVILTLLGLAILAIL) traverse the membrane as a helical segment. The segment at 56-81 (GSRHAYSTQSDTSYDNRERSKRDYTP) is disordered. Residues 69–79 (YDNRERSKRDY) show a composition bias toward basic and acidic residues. A helical transmembrane segment spans residues 99 to 119 (ELILLLMCFILALSRSSIGSI). A disordered region spans residues 311-563 (SEMSIPQGQG…GRKYNKKVEE (253 aa)). Over residues 367-383 (QVEKSEMGVPRRQESQV) the composition is skewed to basic and acidic residues. The segment covering 384 to 395 (KKSQSGVSKGQE) has biased composition (low complexity). Composition is skewed to basic and acidic residues over residues 412–447 (QVEK…KKSE) and 485–544 (EAQE…EKSK).

Its subcellular location is the membrane. This Homo sapiens (Human) protein is Testis-expressed basic protein 1.